The primary structure comprises 254 residues: 3-deoxy-manno-octulosonate cytidylyltransferase (254 aa).

Belongs to the KdsB family.

The protein localises to the cytoplasm. It catalyses the reaction 3-deoxy-alpha-D-manno-oct-2-ulosonate + CTP = CMP-3-deoxy-beta-D-manno-octulosonate + diphosphate. Its pathway is nucleotide-sugar biosynthesis; CMP-3-deoxy-D-manno-octulosonate biosynthesis; CMP-3-deoxy-D-manno-octulosonate from 3-deoxy-D-manno-octulosonate and CTP: step 1/1. It participates in bacterial outer membrane biogenesis; lipopolysaccharide biosynthesis. Its function is as follows. Activates KDO (a required 8-carbon sugar) for incorporation into bacterial lipopolysaccharide in Gram-negative bacteria. This chain is 3-deoxy-manno-octulosonate cytidylyltransferase, found in Pseudomonas putida (strain W619).